We begin with the raw amino-acid sequence, 290 residues long: 33 kDa chaperonin (290 aa).

2 disulfide bridges follow: cysteine 235–cysteine 237 and cysteine 268–cysteine 271.

Belongs to the HSP33 family. Under oxidizing conditions two disulfide bonds are formed involving the reactive cysteines. Under reducing conditions zinc is bound to the reactive cysteines and the protein is inactive.

It localises to the cytoplasm. Functionally, redox regulated molecular chaperone. Protects both thermally unfolding and oxidatively damaged proteins from irreversible aggregation. Plays an important role in the bacterial defense system toward oxidative stress. This Streptococcus pyogenes serotype M28 (strain MGAS6180) protein is 33 kDa chaperonin.